Reading from the N-terminus, the 221-residue chain is MDGMENLMPREKMLQYGIETLTDVELLALFLRVGTRRQDVLSYAQALLQRFGSLYALLSADKAQLIAVDGLGLAKYAQLKGIAELARRYFSSQLVEEAALVTPSMTREFLQSQLTEEEREIFMVIFLDNQNRVLKHSRLFSGTLSHVEVHPREIVREAIKVNAAAVILAHNHPSGSPEPSQADRLITERVIKCCRFMEIRVLDHLVIGRGAYVSFAERGWI.

Residues 99–221 enclose the MPN domain; sequence ALVTPSMTRE…YVSFAERGWI (123 aa). His170, His172, and Asp183 together coordinate Zn(2+). Positions 170-183 match the JAMM motif motif; it reads HNHPSGSPEPSQAD.

It belongs to the UPF0758 family. YicR subfamily.

The protein is UPF0758 protein KPN78578_39390 of Klebsiella pneumoniae subsp. pneumoniae (strain ATCC 700721 / MGH 78578).